The chain runs to 308 residues: MSAQKPGLHPRNRHHSRYDLATLCQVNPELKQFLTLTPAGEQSVDFANPLAVKALNKALLAHFYAVANWDIPDGFLCPPVPGRADYIHHLADLLAEASGTIPANASILDIGVGANCIYPLIGVHEYGWRFTGSETSSQALSSAQAIISANPGLNRAIRLRRQKESGAIFNGIIHKNEQYDATLCNPPFHDSAAAARAGSECKRRNLGLNKDDALNFGGQQQELWCEGGEVTFIKKMIEESKGFAKQVMWFTSLVSRGENLPPLYRALTDVGAVKVVKKEMAQGQKQSRFIAWTFMNDEQRRRFVNRQR.

The protein belongs to the methyltransferase superfamily. METTL16/RlmF family.

Its subcellular location is the cytoplasm. The catalysed reaction is adenosine(1618) in 23S rRNA + S-adenosyl-L-methionine = N(6)-methyladenosine(1618) in 23S rRNA + S-adenosyl-L-homocysteine + H(+). Specifically methylates the adenine in position 1618 of 23S rRNA. The chain is Ribosomal RNA large subunit methyltransferase F from Escherichia coli O157:H7.